Consider the following 381-residue polypeptide: Acetylornithine deacetylase (381 aa).

A Zn(2+)-binding site is contributed by His79. Asp81 is an active-site residue. Zn(2+) is bound at residue Asp111. Glu143 is a catalytic residue. The Zn(2+) site is built by Glu144, Glu168, and His354.

The protein belongs to the peptidase M20A family. ArgE subfamily. In terms of assembly, homodimer. Zn(2+) is required as a cofactor. Requires Co(2+) as cofactor. The cofactor is glutathione.

The protein localises to the cytoplasm. The enzyme catalyses N(2)-acetyl-L-ornithine + H2O = L-ornithine + acetate. It participates in amino-acid biosynthesis; L-arginine biosynthesis; L-ornithine from N(2)-acetyl-L-ornithine (linear): step 1/1. Catalyzes the hydrolysis of the amide bond of N(2)-acetylated L-amino acids. Cleaves the acetyl group from N-acetyl-L-ornithine to form L-ornithine, an intermediate in L-arginine biosynthesis pathway, and a branchpoint in the synthesis of polyamines. This chain is Acetylornithine deacetylase, found in Buchnera aphidicola subsp. Acyrthosiphon pisum (strain Tuc7).